The following is a 418-amino-acid chain: UDP-N-acetylglucosamine 1-carboxyvinyltransferase (418 aa).

A phosphoenolpyruvate-binding site is contributed by 22 to 23 (KN). Arg-92 contributes to the UDP-N-acetyl-alpha-D-glucosamine binding site. Cys-116 (proton donor) is an active-site residue. Cys-116 is subject to 2-(S-cysteinyl)pyruvic acid O-phosphothioketal. UDP-N-acetyl-alpha-D-glucosamine is bound by residues 121–125 (RPVDL), Asp-305, and Ile-327.

This sequence belongs to the EPSP synthase family. MurA subfamily.

The protein localises to the cytoplasm. It catalyses the reaction phosphoenolpyruvate + UDP-N-acetyl-alpha-D-glucosamine = UDP-N-acetyl-3-O-(1-carboxyvinyl)-alpha-D-glucosamine + phosphate. It functions in the pathway cell wall biogenesis; peptidoglycan biosynthesis. Functionally, cell wall formation. Adds enolpyruvyl to UDP-N-acetylglucosamine. The polypeptide is UDP-N-acetylglucosamine 1-carboxyvinyltransferase (Acidiphilium cryptum (strain JF-5)).